The primary structure comprises 242 residues: MKVKTRSKKVNKAWLDQHVNDPYVQRARKEGYRARAAYKLREIDEQLGLIRPGYTVVDLGATPGAWSQYLRRRMAAEGAIIALDILPMEPLEGVTCLHGDFRAPDVQQRLEQALAGRVVDVVVSDMAPNLSGIACADAARMADLVELAVAFSCRHLKPDGALLVKLFHGSGYSDLAALFKQTFLRVVPLKPKASRDKSSETFLLGRGLKKASPNGLDSRSGTAAEPAPLVPIGTNSMPANGD.

Gly64, Trp66, Asp84, Asp100, and Asp125 together coordinate S-adenosyl-L-methionine. Lys165 acts as the Proton acceptor in catalysis. The tract at residues 198–242 (SSETFLLGRGLKKASPNGLDSRSGTAAEPAPLVPIGTNSMPANGD) is disordered. A compositionally biased stretch (polar residues) spans 233–242 (GTNSMPANGD).

This sequence belongs to the class I-like SAM-binding methyltransferase superfamily. RNA methyltransferase RlmE family.

The protein resides in the cytoplasm. It carries out the reaction uridine(2552) in 23S rRNA + S-adenosyl-L-methionine = 2'-O-methyluridine(2552) in 23S rRNA + S-adenosyl-L-homocysteine + H(+). Its function is as follows. Specifically methylates the uridine in position 2552 of 23S rRNA at the 2'-O position of the ribose in the fully assembled 50S ribosomal subunit. The sequence is that of Ribosomal RNA large subunit methyltransferase E from Verminephrobacter eiseniae (strain EF01-2).